A 78-amino-acid chain; its full sequence is D-alanyl carrier protein (78 aa).

In terms of domain architecture, Carrier spans 1–78 (MAFRENVLEI…MIITQLEALK (78 aa)). Ser-36 is modified (O-(pantetheine 4'-phosphoryl)serine).

The protein belongs to the DltC family. 4'-phosphopantetheine is transferred from CoA to a specific serine of apo-DCP.

Its subcellular location is the cytoplasm. It functions in the pathway cell wall biogenesis; lipoteichoic acid biosynthesis. Its function is as follows. Carrier protein involved in the D-alanylation of lipoteichoic acid (LTA). The loading of thioester-linked D-alanine onto DltC is catalyzed by D-alanine--D-alanyl carrier protein ligase DltA. The DltC-carried D-alanyl group is further transferred to cell membrane phosphatidylglycerol (PG) by forming an ester bond, probably catalyzed by DltD. D-alanylation of LTA plays an important role in modulating the properties of the cell wall in Gram-positive bacteria, influencing the net charge of the cell wall. In Listeria monocytogenes serotype 4a (strain HCC23), this protein is D-alanyl carrier protein.